The primary structure comprises 447 residues: MAVTDRDIFTVTRLNQAVQGLLEGTFPLIWVEGELSSVSRPASGHLYFTLKDSGAQVRCALFRNRAQLMRFRPADGMQVLVRARVGLYAPRGDYQLIVEHMEEAGDGALRRAFEELKQRLEREGLFDAERKRPLPRFPRRLGVITSPTGAAIRDILSVLRRRFPGLPALIYPVPVQGAAAAPAIAEALRTASARKDCDVLILARGGGSLEDLWAFNEEIVARAIHDCEIPVVSGVGHEVDVTIADLAADLRAATPSAAAELVSPLRDEWLLHVERQRRLLVERMQRGLQHQALKLDNLERRLRQQHPERRLQNQAQRVDELERRLALAMQHRLRHRESRLARLQDRLQHRSPARALERLEAREAQLRLRLDSALRRRLDRFEARLAAAGRALHSVSPLATLGRGYSILTTAEGQVIRDASQVQVNDRVEARLGKGRLSCTVVTRYEG.

It belongs to the XseA family. Heterooligomer composed of large and small subunits.

It is found in the cytoplasm. It carries out the reaction Exonucleolytic cleavage in either 5'- to 3'- or 3'- to 5'-direction to yield nucleoside 5'-phosphates.. In terms of biological role, bidirectionally degrades single-stranded DNA into large acid-insoluble oligonucleotides, which are then degraded further into small acid-soluble oligonucleotides. The polypeptide is Exodeoxyribonuclease 7 large subunit (Thioalkalivibrio sulfidiphilus (strain HL-EbGR7)).